The primary structure comprises 258 residues: tRNA pseudouridine synthase A (258 aa).

The Nucleophile role is filled by D52. Residue Y111 coordinates substrate.

Belongs to the tRNA pseudouridine synthase TruA family. As to quaternary structure, homodimer.

The enzyme catalyses uridine(38/39/40) in tRNA = pseudouridine(38/39/40) in tRNA. Formation of pseudouridine at positions 38, 39 and 40 in the anticodon stem and loop of transfer RNAs. This is tRNA pseudouridine synthase A from Azorhizobium caulinodans (strain ATCC 43989 / DSM 5975 / JCM 20966 / LMG 6465 / NBRC 14845 / NCIMB 13405 / ORS 571).